The primary structure comprises 110 residues: Transcription factor S (110 aa).

The Zn(2+) site is built by Cys4, Cys7, Cys22, Cys25, Cys71, Cys74, Cys99, and Cys102. Residues Thr67–Arg107 form a TFIIS-type zinc finger.

Belongs to the archaeal rpoM/eukaryotic RPA12/RPB9/RPC11 RNA polymerase family.

The protein localises to the chromosome. Functionally, involved in transcriptional proofreading and fidelity. Induces RNA cleavage activity in RNA polymerase (RNAP). Stimulates transcription elongation by RNAP on both naked DNA and histone-bound DNA (chromatin), facilitating transcription through the histone barrier. Stimulation depends on transcript cleavage. In the presence of TFS, the cleavage activity of RNAP truncates RNA back to position +15 in a stepwise manner by releasing mainly dinucleotides from the 3'-end of the nascent RNA. The truncated RNAs are able to continue elongation. Misincorporation of nucleotides during elongation of transcription leads to arrested elongation complexes which are rescued by TFS-promoted removal of a dinucleotide from the 3'-end. TFS is able to induce a cleavage resynthesis cycle in stalled elongation complexes (resulting from the next missing nucleotide or a reduced incorporation rate of a wrong nucleotide) preventing misincorporation and enabling proofreading in a post-incorporation manner. Pausing of elongation complexes is the main determinant of TFS-induced RNA cleavage. The chain is Transcription factor S from Thermococcus kodakarensis (strain ATCC BAA-918 / JCM 12380 / KOD1) (Pyrococcus kodakaraensis (strain KOD1)).